A 387-amino-acid polypeptide reads, in one-letter code: 26S proteasome regulatory subunit 6B homolog (387 aa).

175–182 contributes to the ATP binding site; that stretch reads GPPGTGKT.

Belongs to the AAA ATPase family. The 26S proteasome consists of a 20S proteasome core and two 19S regulatory subunits. The 20S proteasome core is composed of 28 subunits that are arranged in four stacked rings, resulting in a barrel-shaped structure. The two end rings are each formed by seven alpha subunits, and the two central rings are each formed by seven beta subunits. The catalytic chamber with the active sites is on the inside of the barrel.

The protein localises to the cytoplasm. The protein resides in the nucleus. Acts as a regulatory subunit of the 26S proteasome which degrades poly-ubiquitinated proteins in the cytoplasm and in the nucleus. It is essential for the regulated turnover of proteins and for the removal of misfolded proteins. The proteasome is a multicatalytic proteinase complex that is characterized by its ability to cleave peptides with Arg, Phe, Tyr, Leu, and Glu adjacent to the leaving group at neutral or slightly basic pH. The sequence is that of 26S proteasome regulatory subunit 6B homolog from Encephalitozoon cuniculi (strain GB-M1) (Microsporidian parasite).